We begin with the raw amino-acid sequence, 360 residues long: Amine dehydrogenase (360 aa).

It belongs to the amine dehydrogenase family. As to quaternary structure, homodimer.

It carries out the reaction a secondary alkyl amine + NAD(+) + H2O = a ketone + NH4(+) + NADH + H(+). The catalysed reaction is a secondary alkyl amine + NADP(+) + H2O = a ketone + NH4(+) + NADPH + H(+). It catalyses the reaction serinol + NAD(+) + H2O = dihydroxyacetone + NH4(+) + NADH + H(+). The enzyme catalyses serinol + NADP(+) + H2O = dihydroxyacetone + NH4(+) + NADPH + H(+). It carries out the reaction 2-aminopropan-1-ol + NAD(+) + H2O = hydroxyacetone + NH4(+) + NADH + H(+). The catalysed reaction is (R)-1-phenylethylamine + NAD(+) + H2O = acetophenone + NH4(+) + NADH + H(+). It catalyses the reaction (S)-1-phenylethylamine + NAD(+) + H2O = acetophenone + NH4(+) + NADH + H(+). The enzyme catalyses (2S)-2-aminobutan-1-ol + NAD(+) + H2O = 1-hydroxy-2-butanone + NH4(+) + NADH + H(+). It carries out the reaction (2S)-2-amino-3-methylbutan-1-ol + NAD(+) + H2O = 1-hydroxy-3-methylbutan-2-one + NH4(+) + NADH + H(+). The catalysed reaction is 2-aminopentan-1-ol + NAD(+) + H2O = 1-hydroxypentan-2-one + NH4(+) + NADH + H(+). It catalyses the reaction (S)-leucinol + NAD(+) + H2O = 1-hydroxy-4-methylpentan-2-one + NH4(+) + NADH + H(+). The enzyme catalyses (S)-isoleucinol + NAD(+) + H2O = (3S)-1-hydroxy-3-methylpentan-2-one + NH4(+) + NADH + H(+). It carries out the reaction (S)-methioninol + NAD(+) + H2O = 1-hydroxy-4-(methythio)butan-2-one + NH4(+) + NADH + H(+). The catalysed reaction is 2-aminocyclohexanol + NAD(+) + H2O = 2-hydroxycyclohexan-1-one + NH4(+) + NADH + H(+). It catalyses the reaction L-alanine + NAD(+) + H2O = pyruvate + NH4(+) + NADH + H(+). The enzyme catalyses D-alanine + NAD(+) + H2O = pyruvate + NH4(+) + NADH + H(+). It carries out the reaction L-aspartate + NAD(+) + H2O = oxaloacetate + NH4(+) + NADH + H(+). The catalysed reaction is D-aspartate + NAD(+) + H2O = oxaloacetate + NH4(+) + NADH + H(+). It catalyses the reaction L-glutamate + NAD(+) + H2O = 2-oxoglutarate + NH4(+) + NADH + H(+). The enzyme catalyses D-glutamate + NAD(+) + H2O = 2-oxoglutarate + NH4(+) + NADH + H(+). It carries out the reaction L-serine + NAD(+) + H2O = 3-hydroxypyruvate + NH4(+) + NADH + H(+). The catalysed reaction is D-serine + NAD(+) + H2O = 3-hydroxypyruvate + NH4(+) + NADH + H(+). It catalyses the reaction methylamine + NAD(+) + H2O = formaldehyde + NH4(+) + NADH + H(+). The enzyme catalyses ethylamine + NAD(+) + H2O = acetaldehyde + NH4(+) + NADH + H(+). It carries out the reaction propylamine + NAD(+) + H2O = propanal + NH4(+) + NADH + H(+). The catalysed reaction is butylamine + NAD(+) + H2O = butanal + NH4(+) + NADH + H(+). It catalyses the reaction hexylamine + NAD(+) + H2O = hexanal + NH4(+) + NADH + H(+). The enzyme catalyses octylamine + NAD(+) + H2O = octanal + NH4(+) + NADH + H(+). It carries out the reaction (R)-sec-butylamine + NAD(+) + H2O = butan-2-one + NH4(+) + NADH + H(+). The catalysed reaction is (S)-sec-butylamine + NAD(+) + H2O = butan-2-one + NH4(+) + NADH + H(+). It catalyses the reaction 2-aminopentane + NAD(+) + H2O = pentan-2-one + NH4(+) + NADH + H(+). The enzyme catalyses 3-aminopentane + NAD(+) + H2O = pentan-3-one + NH4(+) + NADH + H(+). It carries out the reaction (2R)-heptan-2-amine + NAD(+) + H2O = heptan-2-one + NH4(+) + NADH + H(+). The catalysed reaction is (2S)-heptan-2-amine + NAD(+) + H2O = heptan-2-one + NH4(+) + NADH + H(+). It catalyses the reaction benzylamine + NAD(+) + H2O = benzaldehyde + NH4(+) + NADH + H(+). The enzyme catalyses 3-aminobutan-2-ol + NAD(+) + H2O = acetoin + NH4(+) + NADH + H(+). It carries out the reaction 3-aminobutan-1-ol + NAD(+) + H2O = 4-hydroxybutan-2-one + NH4(+) + NADH + H(+). The catalysed reaction is 5-hydroxypentan-2-amine + NAD(+) + H2O = 5-hydroxypentan-2-one + NH4(+) + NADH + H(+). It catalyses the reaction 4-hydroxyhexan-3-amine + NAD(+) + H2O = 4-hydroxyhexan-3-one + NH4(+) + NADH + H(+). The enzyme catalyses 5-hydroxyoctan-4-amine + NAD(+) + H2O = 5-hydroxyoctan-4-one + NH4(+) + NADH + H(+). It carries out the reaction 2-hydroxy-1-phenylethan-1-amine + NAD(+) + H2O = 2-hydroxyacetophenone + NH4(+) + NADH + H(+). The catalysed reaction is hexan-2-amine + NAD(+) + H2O = hexan-2-one + NH4(+) + NADH + H(+). It catalyses the reaction 4-phenylbutan-2-amine + NAD(+) + H2O = 4-phenylbutan-2-one + NH4(+) + NADH + H(+). Its function is as follows. Catalyzes the reversible oxidative deaminations of a broad range of amines, amino alcohols and amino acids. Catalyzes the reversible dehydrogenation of serinol in the presence of NAD(+) to give dihydroxyacetone, ammonium ion and NADH, while NADP(+) shows a slight activity. Is also able to produce 2-amino-1-propanol and aspartate by the reductive amination of the corresponding keto alcohol (hydroxyacetone) and keto acid (oxaloacetate) in the presence of ammonium ions and NADH, and that of acetophenone from phenylethylamine by the oxidative deamination in the presence of NAD(+). This is Amine dehydrogenase from Streptomyces virginiae (Streptomyces cinnamonensis).